The primary structure comprises 284 residues: Undecaprenyl-diphosphatase (284 aa).

8 helical membrane passes run 7–27 (IILG…TGHL), 44–64 (EMFD…LYFH), 90–110 (LWLK…PLND), 116–136 (FYHF…FIVI), 167–187 (VLSL…ALLV), 197–217 (FTFF…ILHF), 229–249 (FGVL…AIKF), and 259–279 (FTFF…YAMF).

It belongs to the UppP family.

Its subcellular location is the cell membrane. It catalyses the reaction di-trans,octa-cis-undecaprenyl diphosphate + H2O = di-trans,octa-cis-undecaprenyl phosphate + phosphate + H(+). Its function is as follows. Catalyzes the dephosphorylation of undecaprenyl diphosphate (UPP). Confers resistance to bacitracin. The polypeptide is Undecaprenyl-diphosphatase (Lactococcus lactis subsp. lactis (strain IL1403) (Streptococcus lactis)).